The following is a 521-amino-acid chain: Spermidine transporter DUR31 (521 aa).

A helical transmembrane segment spans residues A11–F31. N41 carries N-linked (GlcNAc...) asparagine glycosylation. 12 helical membrane passes run I47–A67, L79–I99, F117–M137, A156–F176, G187–I207, L227–L247, I264–V284, W310–L330, I354–I374, I377–A397, G406–V426, and F453–L473.

Belongs to the sodium:solute symporter (SSF) (TC 2.A.21) family.

It is found in the membrane. It catalyses the reaction spermidine(in) = spermidine(out). In terms of biological role, spermidine transporter that is also used by salivary gland-secreted histatin 5 (Hst 5) to enter into candidal cells. A major component of host nonimmune defense systems is salivary histatins, a family of small (3-4 kDa), histidine-rich, cationic proteins secreted by major salivary glands in humans and higher primates. Hst 5 is the most potent of the 12 histatin family members and has fungicidal activity against blastoconidial and filamentous forms of Candida albicans. DUR31 only functions under high concentrations of Hst 5. Hst 5 cojugates to spermidine to be uptaken by DUR31. This chain is Spermidine transporter DUR31, found in Candida albicans (strain SC5314 / ATCC MYA-2876) (Yeast).